Here is a 434-residue protein sequence, read N- to C-terminus: Probable proline transporter 2 (434 aa).

11 helical membrane passes run 26–46 (PWYQVGFVLTTGVNSAYVLGY), 49–69 (SVMVPLGWIGGTCGLILAAAI), 106–126 (LTWALQYVNLFMINTGFIILA), 149–169 (IALSGFVCALFAFGIPYLSAL), 171–191 (IWLGFSTFFSLIYITIAFVLS), 213–233 (IFTTIGAVANLVFAYNTGMLP), 251–271 (LWFQFTVGSLPLYAVTFMGYW), 297–317 (LSAFLQTVIALHIFASPMYEF), 339–359 (VGVRGGYLTVNTLVAAMLPFL), 362–382 (FMSLTGALSTFPLTFVLANHM), and 403–423 (VAGFSLLSIAAAVAALRLIMV).

This sequence belongs to the amino acid/polyamine transporter 2 family. Amino acid/auxin permease (AAAP) (TC 2.A.18.3) subfamily.

It is found in the cell membrane. Its function is as follows. Proline transporter that mediates proline transport across the plasma membrane. The sequence is that of Probable proline transporter 2 from Oryza sativa subsp. japonica (Rice).